The following is a 333-amino-acid chain: Glycerol-3-phosphate dehydrogenase [NAD(P)+] (333 aa).

Residues Ser-10, Trp-11, His-31, Arg-32, and Lys-105 each coordinate NADPH. The sn-glycerol 3-phosphate site is built by Lys-105, Gly-136, and Ser-138. An NADPH-binding site is contributed by Ala-140. Sn-glycerol 3-phosphate is bound by residues Lys-191, Asp-244, Ser-254, Arg-255, and Asn-256. Lys-191 serves as the catalytic Proton acceptor. Arg-255 provides a ligand contact to NADPH. NADPH is bound by residues Ile-279 and Glu-281.

This sequence belongs to the NAD-dependent glycerol-3-phosphate dehydrogenase family.

The protein localises to the cytoplasm. It catalyses the reaction sn-glycerol 3-phosphate + NAD(+) = dihydroxyacetone phosphate + NADH + H(+). The enzyme catalyses sn-glycerol 3-phosphate + NADP(+) = dihydroxyacetone phosphate + NADPH + H(+). It functions in the pathway membrane lipid metabolism; glycerophospholipid metabolism. Catalyzes the reduction of the glycolytic intermediate dihydroxyacetone phosphate (DHAP) to sn-glycerol 3-phosphate (G3P), the key precursor for phospholipid synthesis. The protein is Glycerol-3-phosphate dehydrogenase [NAD(P)+] of Chlorobium chlorochromatii (strain CaD3).